Here is a 353-residue protein sequence, read N- to C-terminus: Protein U67 (353 aa).

It belongs to the herpesviridae UL95 family.

The sequence is that of Protein U67 (U67) from Homo sapiens (Human).